A 130-amino-acid chain; its full sequence is Aspartate 1-decarboxylase (130 aa).

The active-site Schiff-base intermediate with substrate; via pyruvic acid is the Ser-25. Position 25 is a pyruvic acid (Ser) (Ser-25). Substrate is bound at residue Thr-57. Tyr-58 serves as the catalytic Proton donor. 73–75 contacts substrate; sequence GAA.

The protein belongs to the PanD family. As to quaternary structure, heterooctamer of four alpha and four beta subunits. Requires pyruvate as cofactor. Post-translationally, is synthesized initially as an inactive proenzyme, which is activated by self-cleavage at a specific serine bond to produce a beta-subunit with a hydroxyl group at its C-terminus and an alpha-subunit with a pyruvoyl group at its N-terminus.

It localises to the cytoplasm. It carries out the reaction L-aspartate + H(+) = beta-alanine + CO2. The protein operates within cofactor biosynthesis; (R)-pantothenate biosynthesis; beta-alanine from L-aspartate: step 1/1. Its function is as follows. Catalyzes the pyruvoyl-dependent decarboxylation of aspartate to produce beta-alanine. This chain is Aspartate 1-decarboxylase, found in Myxococcus xanthus (strain DK1622).